A 433-amino-acid chain; its full sequence is GTPase Obg (433 aa).

The Obg domain occupies 2-160 (PTFVDQTKIE…RVLRLELKLL (159 aa)). The 174-residue stretch at 161–334 (ADVGLVGFPS…LMNDTATLVE (174 aa)) folds into the OBG-type G domain. GTP contacts are provided by residues 167–174 (GFPSVGKS), 192–196 (FTTLT), 214–217 (DLPG), 284–287 (SQMD), and 315–317 (SSV). Mg(2+) is bound by residues Ser174 and Thr194. One can recognise an OCT domain in the interval 355–433 (YKAPQRNEFM…IGKFVFEFVQ (79 aa)).

The protein belongs to the TRAFAC class OBG-HflX-like GTPase superfamily. OBG GTPase family. As to quaternary structure, monomer. It depends on Mg(2+) as a cofactor.

The protein resides in the cytoplasm. Its function is as follows. An essential GTPase which binds GTP, GDP and possibly (p)ppGpp with moderate affinity, with high nucleotide exchange rates and a fairly low GTP hydrolysis rate. Plays a role in control of the cell cycle, stress response, ribosome biogenesis and in those bacteria that undergo differentiation, in morphogenesis control. This chain is GTPase Obg, found in Lactobacillus acidophilus (strain ATCC 700396 / NCK56 / N2 / NCFM).